The sequence spans 116 residues: T-cell leukemia/lymphoma protein 1A (116 aa).

This sequence belongs to the TCL1 family. In terms of assembly, homodimer. Interacts with AKT1, AKT2 and AKT3 (via PH domain). Interacts with PNPT1; the interaction has no effect on PNPT1 exonuclease activity.

It is found in the cytoplasm. The protein resides in the nucleus. It localises to the microsome. Its subcellular location is the endoplasmic reticulum. Functionally, enhances the phosphorylation and activation of AKT1 and AKT2. Enhances cell proliferation, stabilizes mitochondrial membrane potential and promotes cell survival. The chain is T-cell leukemia/lymphoma protein 1A (Tcl1a) from Mus musculus (Mouse).